The chain runs to 398 residues: Abhydrolase domain-containing protein 2 (398 aa).

Topologically, residues 1 to 4 are cytoplasmic; sequence MSTA. A helical; Signal-anchor for type II membrane protein transmembrane segment spans residues 5-22; sequence FLTLIAVIVCILFRILNV. Topologically, residues 23-398 are extracellular; sequence HSQPLKPSVW…MMHEVGKVAP (376 aa). Positions 113–365 constitute an AB hydrolase-1 domain; that stretch reads VAICPGIANS…HGGHLGFYEG (253 aa). Catalysis depends on charge relay system residues Ser192, Asp328, and His359.

Belongs to the AB hydrolase superfamily. AB hydrolase 4 family.

Its subcellular location is the membrane. This chain is Abhydrolase domain-containing protein 2 (Hydr2), found in Drosophila melanogaster (Fruit fly).